The chain runs to 187 residues: GMP synthase [glutamine-hydrolyzing] subunit A (187 aa).

The 187-residue stretch at 1 to 187 folds into the Glutamine amidotransferase type-1 domain; that stretch reads MILIIDNHGQ…KNFAKLCGEL (187 aa). Cysteine 76 serves as the catalytic Nucleophile. Catalysis depends on residues histidine 164 and glutamate 166.

Heterodimer composed of a glutamine amidotransferase subunit (A) and a GMP-binding subunit (B).

It catalyses the reaction XMP + L-glutamine + ATP + H2O = GMP + L-glutamate + AMP + diphosphate + 2 H(+). Its pathway is purine metabolism; GMP biosynthesis; GMP from XMP (L-Gln route): step 1/1. In terms of biological role, catalyzes the synthesis of GMP from XMP. The chain is GMP synthase [glutamine-hydrolyzing] subunit A from Methanopyrus kandleri (strain AV19 / DSM 6324 / JCM 9639 / NBRC 100938).